Here is a 117-residue protein sequence, read N- to C-terminus: Putative phosphotransferase enzyme IIB component MG129 (117 aa).

Residues 1–21 (MKWLLWLGYIFSFGLLYLWIV) form a helical membrane-spanning segment. In terms of domain architecture, PTS EIIB type-1 spans 42-117 (PFKVKDFVSA…ELKKKIEDEQ (76 aa)).

It is found in the membrane. Its function is as follows. The phosphoenolpyruvate-dependent sugar phosphotransferase system (PTS), a major carbohydrate active -transport system, catalyzes the phosphorylation of incoming sugar substrates concomitant with their translocation across the cell membrane. This Mycoplasma genitalium (strain ATCC 33530 / DSM 19775 / NCTC 10195 / G37) (Mycoplasmoides genitalium) protein is Putative phosphotransferase enzyme IIB component MG129.